The primary structure comprises 634 residues: DNA-directed RNA polymerase subunit gamma (634 aa).

4 residues coordinate Zn(2+): C74, C76, C89, and C92. Mg(2+) is bound by residues D471, D473, and D475.

It belongs to the RNA polymerase beta' chain family. RpoC1 subfamily. In terms of assembly, in cyanobacteria the RNAP catalytic core is composed of 2 alpha, 1 beta, 1 beta', 1 gamma and 1 omega subunit. When a sigma factor is associated with the core the holoenzyme is formed, which can initiate transcription. Requires Mg(2+) as cofactor. Zn(2+) serves as cofactor.

The enzyme catalyses RNA(n) + a ribonucleoside 5'-triphosphate = RNA(n+1) + diphosphate. DNA-dependent RNA polymerase catalyzes the transcription of DNA into RNA using the four ribonucleoside triphosphates as substrates. This is DNA-directed RNA polymerase subunit gamma from Synechococcus sp. (strain CC9902).